The sequence spans 397 residues: Phosphoglycerate kinase (397 aa).

Substrate-binding positions include aspartate 23–asparagine 25, arginine 38, histidine 61–lysine 64, arginine 122, and arginine 155. Residues lysine 206, glycine 296, glutamate 327, and glycine 353 to serine 356 each bind ATP.

The protein belongs to the phosphoglycerate kinase family. In terms of assembly, monomer.

It is found in the cytoplasm. The enzyme catalyses (2R)-3-phosphoglycerate + ATP = (2R)-3-phospho-glyceroyl phosphate + ADP. The protein operates within carbohydrate degradation; glycolysis; pyruvate from D-glyceraldehyde 3-phosphate: step 2/5. The polypeptide is Phosphoglycerate kinase (Clostridium perfringens (strain SM101 / Type A)).